The following is a 427-amino-acid chain: Adenylosuccinate synthetase (427 aa).

GTP is bound by residues 12 to 18 (GDEGKGK) and 40 to 42 (GHT). Asp-13 functions as the Proton acceptor in the catalytic mechanism. 2 residues coordinate Mg(2+): Asp-13 and Gly-40. Residues 13 to 16 (DEGK), 38 to 41 (NAGH), Thr-128, Arg-142, Gln-223, Thr-238, and Arg-302 each bind IMP. Residue His-41 is the Proton donor of the active site. A substrate-binding site is contributed by 298–304 (VTTGRAR). Residues Arg-304, 330-332 (KLD), and 412-414 (GVG) contribute to the GTP site.

The protein belongs to the adenylosuccinate synthetase family. As to quaternary structure, homodimer. Mg(2+) serves as cofactor.

The protein resides in the cytoplasm. The catalysed reaction is IMP + L-aspartate + GTP = N(6)-(1,2-dicarboxyethyl)-AMP + GDP + phosphate + 2 H(+). It functions in the pathway purine metabolism; AMP biosynthesis via de novo pathway; AMP from IMP: step 1/2. In terms of biological role, plays an important role in the de novo pathway of purine nucleotide biosynthesis. Catalyzes the first committed step in the biosynthesis of AMP from IMP. This is Adenylosuccinate synthetase from Frankia casuarinae (strain DSM 45818 / CECT 9043 / HFP020203 / CcI3).